The chain runs to 369 residues: Cytoplasmic tRNA 2-thiolation protein 1 (369 aa).

Belongs to the TtcA family. CTU1/NCS6/ATPBD3 subfamily.

It localises to the cytoplasm. The protein operates within tRNA modification; 5-methoxycarbonylmethyl-2-thiouridine-tRNA biosynthesis. Its function is as follows. Plays a central role in 2-thiolation of mcm(5)S(2)U at tRNA wobble positions of tRNA(Lys), tRNA(Glu) and tRNA(Gln). Directly binds tRNAs and probably acts by catalyzing adenylation of tRNAs, an intermediate required for 2-thiolation. It is unclear whether it acts as a sulfurtransferase that transfers sulfur from thiocarboxylated URM1 onto the uridine of tRNAs at wobble position. Prior mcm(5) tRNA modification by the elongator complex is required for 2-thiolation. May also be involved in protein urmylation. This is Cytoplasmic tRNA 2-thiolation protein 1 from Cryptococcus neoformans var. neoformans serotype D (strain JEC21 / ATCC MYA-565) (Filobasidiella neoformans).